Consider the following 355-residue polypeptide: Adenine deaminase (355 aa).

Residues H24, H26, and H204 each contribute to the Zn(2+) site. The active-site Proton donor is the E207. D285 is a binding site for Zn(2+). D286 provides a ligand contact to substrate.

This sequence belongs to the metallo-dependent hydrolases superfamily. Adenosine and AMP deaminases family. Adenine deaminase type 2 subfamily. Zn(2+) serves as cofactor.

It catalyses the reaction adenine + H2O + H(+) = hypoxanthine + NH4(+). Functionally, catalyzes the hydrolytic deamination of adenine to hypoxanthine. Plays an important role in the purine salvage pathway and in nitrogen catabolism. This chain is Adenine deaminase, found in Geotalea uraniireducens (strain Rf4) (Geobacter uraniireducens).